The following is a 604-amino-acid chain: Complement factor I (604 aa).

The N-terminal stretch at 1–18 is a signal peptide; sequence MKLALLILLLLNPHLSSS. Intrachain disulfides connect Cys-36-Cys-260, Cys-46-Cys-57, Cys-51-Cys-62, Cys-64-Cys-96, Cys-70-Cys-89, Cys-78-Cys-109, Cys-144-Cys-186, Cys-157-Cys-219, Cys-191-Cys-201, Cys-234-Cys-252, Cys-246-Cys-261, Cys-264-Cys-276, Cys-271-Cys-289, Cys-283-Cys-298, Cys-349-Cys-474, Cys-387-Cys-403, Cys-395-Cys-465, Cys-488-Cys-552, Cys-516-Cys-531, and Cys-542-Cys-571. Asn-40 is a glycosylation site (N-linked (GlcNAc...) asparagine). Residues 58–111 form the Kazal-like domain; the sequence is IEGTCACKLPYQCPKAGTPVCATNGRGYPTYCHLKSFECLHPEIKFSNNGTCTA. N-linked (GlcNAc...) asparagine glycosylation is found at Asn-106, Asn-116, and Asn-182. Positions 117 to 217 constitute an SRCR domain; sequence VSLIYGSTDT…SKAPHGLAGV (101 aa). LDL-receptor class A domains lie at 218–262 and 263–299; these read VCYT…LCCK and GCRG…SGCE. Ca(2+) contacts are provided by Lys-244, Asp-247, Val-249, Asp-251, Asp-257, and Glu-258. Residues Asn-284, Glu-286, Asp-288, Asp-294, and Glu-295 each coordinate Ca(2+). Positions 362–595 constitute a Peptidase S1 domain; sequence VVGGKPAEMG…YFDWISYYVG (234 aa). Residues His-402 and Asp-450 each act as charge relay system in the active site. Asn-515 is a glycosylation site (N-linked (GlcNAc...) asparagine). The Charge relay system role is filled by Ser-546. The N-linked (GlcNAc...) asparagine glycan is linked to Asn-557.

This sequence belongs to the peptidase S1 family. In terms of assembly, heterodimer of a light and heavy chains; disulfide-linked. The fully processed and mature protein circulates as a zymogen, and is allosterically activated by substrate-induced remodeling of the active site. Interacts with C3b. Interacts with complement factor H. As to expression, expressed in the liver by hepatocytes. Also present in other cells such as monocytes, fibroblasts or keratinocytes.

It localises to the secreted. Its subcellular location is the extracellular space. It carries out the reaction Inactivates complement subcomponents C3b, iC3b and C4b by proteolytic cleavage.. In terms of biological role, trypsin-like serine protease that plays an essential role in regulating the immune response by controlling all complement pathways. Inhibits these pathways by cleaving three peptide bonds in the alpha-chain of C3b and two bonds in the alpha-chain of C4b thereby inactivating these proteins. Essential cofactors for these reactions include factor H and C4BP in the fluid phase and membrane cofactor protein/CD46 and CR1 on cell surfaces. The presence of these cofactors on healthy cells allows degradation of deposited C3b by CFI in order to prevent undesired complement activation, while in apoptotic cells or microbes, the absence of such cofactors leads to C3b-mediated complement activation and subsequent opsonization. The polypeptide is Complement factor I (Cfi) (Rattus norvegicus (Rat)).